We begin with the raw amino-acid sequence, 360 residues long: Peptide chain release factor 1 (360 aa).

Gln235 is subject to N5-methylglutamine.

The protein belongs to the prokaryotic/mitochondrial release factor family. In terms of processing, methylated by PrmC. Methylation increases the termination efficiency of RF1.

Its subcellular location is the cytoplasm. Functionally, peptide chain release factor 1 directs the termination of translation in response to the peptide chain termination codons UAG and UAA. The protein is Peptide chain release factor 1 of Burkholderia mallei (strain NCTC 10247).